Here is an 800-residue protein sequence, read N- to C-terminus: Putative antiporter subunit mnhA2 (800 aa).

The next 21 membrane-spanning stretches (helical) occupy residues 1–21 (MSLV…LFTL), 29–49 (VAGY…IMKI), 78–98 (GLSL…FFYA), 109–129 (LPRF…IVIA), 133–153 (ILMY…ISYW), 167–187 (FMIT…LYII), 209–229 (FIPM…QFPF), 241–261 (TPVS…FLLF), 272–292 (VYIY…SLTA), 300–320 (GILA…VGLG), 336–356 (ILVL…KCAL), 387–407 (IVML…GFLS), 424–444 (YGFV…ILTF), 472–492 (PWLF…IFFV), 528–548 (VNLP…LALV), 595–615 (IMIT…TVGF), 627–647 (GPLE…LIFI), 651–671 (LTMV…FIAM), 676–696 (LALT…VSFS), 712–732 (TFKI…IFVA), and 768–788 (LDTM…YTLL).

The protein belongs to the CPA3 antiporters (TC 2.A.63) subunit A family. As to quaternary structure, may form a heterooligomeric complex that consists of seven subunits: mnhA2, mnhB2, mnhC2, mnhD2, mnhE2, mnhF2 and mnhG2.

Its subcellular location is the cell membrane. The chain is Putative antiporter subunit mnhA2 (mnhA2) from Staphylococcus epidermidis (strain ATCC 12228 / FDA PCI 1200).